The chain runs to 321 residues: 37 kDa cell surface protein (321 aa).

It is found in the secreted. Its subcellular location is the cell wall. This is 37 kDa cell surface protein (CSP37) from Candida albicans (Yeast).